A 149-amino-acid polypeptide reads, in one-letter code: NPC intracellular cholesterol transporter 2 (149 aa).

Residues 1-19 (MRFLTVAFLFLALSASALA) form the signal peptide. Intrachain disulfides connect Cys-27-Cys-140, Cys-42-Cys-47, and Cys-93-Cys-99. N-linked (GlcNAc...) asparagine glycosylation occurs at Asn-58. N6-acetyllysine is present on Lys-116.

Belongs to the NPC2 family. In terms of assembly, interacts with NPC1 (via the second lumenal domain) in a cholestrol-dependent manner. Interacts with NUS1/NgBR, the interaction stabilizes NCP2 and regulates cholesterol trafficking. Interacts with DHDDS. Interacts with NEDD4L (via C2 domain). Interacts with NPC1L1. In terms of tissue distribution, expressed in kidney, spleen, liver and mammary gland, but not in testis.

It localises to the secreted. It is found in the endoplasmic reticulum. Its subcellular location is the lysosome. The catalysed reaction is cholesterol(in) = cholesterol(out). In terms of biological role, intracellular cholesterol transporter which acts in concert with NPC1 and plays an important role in the egress of cholesterol from the lysosomal compartment. Unesterified cholesterol that has been released from LDLs in the lumen of the late endosomes/lysosomes is transferred by NPC2 to the cholesterol-binding pocket in the N-terminal domain of NPC1. May bind and mobilize cholesterol that is associated with membranes. NPC2 binds cholesterol with a 1:1 stoichiometry. Can bind a variety of sterols, including lathosterol, desmosterol and the plant sterols stigmasterol and beta-sitosterol. The secreted form of NCP2 regulates biliary cholesterol secretion via stimulation of ABCG5/ABCG8-mediated cholesterol transport. This Bos taurus (Bovine) protein is NPC intracellular cholesterol transporter 2.